We begin with the raw amino-acid sequence, 626 residues long: Fructose-1,6-bisphosphatase class 3 (626 aa).

This sequence belongs to the FBPase class 3 family. It depends on Mn(2+) as a cofactor.

It catalyses the reaction beta-D-fructose 1,6-bisphosphate + H2O = beta-D-fructose 6-phosphate + phosphate. It participates in carbohydrate biosynthesis; gluconeogenesis. This chain is Fructose-1,6-bisphosphatase class 3, found in Enterococcus faecalis (strain ATCC 700802 / V583).